The sequence spans 97 residues: Large ribosomal subunit protein uL23 (97 aa).

Belongs to the universal ribosomal protein uL23 family. Part of the 50S ribosomal subunit. Contacts protein L29, and trigger factor when it is bound to the ribosome.

In terms of biological role, one of the early assembly proteins it binds 23S rRNA. One of the proteins that surrounds the polypeptide exit tunnel on the outside of the ribosome. Forms the main docking site for trigger factor binding to the ribosome. This is Large ribosomal subunit protein uL23 from Clostridium perfringens (strain SM101 / Type A).